Here is a 384-residue protein sequence, read N- to C-terminus: N-acetylneuraminate epimerase (384 aa).

An N-terminal signal peptide occupies residues 1–24 (MMKTKYLLLPLLASSSLLSHMAFA). Kelch repeat units lie at residues 46–90 (KVYV…TVVG), 92–145 (NIFV…YSPD), 147–184 (KQVL…KIVD), 185–230 (DYMG…VIDG), 233–281 (ITLI…IAGA), 303–352 (AQFE…SVKG), and 354–383 (VLMV…IDIV). The active-site Proton acceptor is E239.

This sequence belongs to the NanM family. In terms of assembly, homodimer.

Its subcellular location is the periplasm. The catalysed reaction is N-acetyl-alpha-neuraminate = N-acetyl-beta-neuraminate. In terms of biological role, converts alpha-N-acetylneuranimic acid (Neu5Ac) to the beta-anomer, accelerating the equilibrium between the alpha- and beta-anomers. Probably facilitates sialidase-negative bacteria to compete successfully for limited amounts of extracellular Neu5Ac, which is likely taken up in the beta-anomer. In addition, the rapid removal of sialic acid from solution might be advantageous to the bacterium to damp down host responses. The protein is N-acetylneuraminate epimerase of Vibrio vulnificus (strain YJ016).